The chain runs to 306 residues: UDP-3-O-acyl-N-acetylglucosamine deacetylase (306 aa).

Positions 79, 238, and 242 each coordinate Zn(2+). Histidine 265 acts as the Proton donor in catalysis.

The protein belongs to the LpxC family. Requires Zn(2+) as cofactor.

It catalyses the reaction a UDP-3-O-[(3R)-3-hydroxyacyl]-N-acetyl-alpha-D-glucosamine + H2O = a UDP-3-O-[(3R)-3-hydroxyacyl]-alpha-D-glucosamine + acetate. It participates in glycolipid biosynthesis; lipid IV(A) biosynthesis; lipid IV(A) from (3R)-3-hydroxytetradecanoyl-[acyl-carrier-protein] and UDP-N-acetyl-alpha-D-glucosamine: step 2/6. Its function is as follows. Catalyzes the hydrolysis of UDP-3-O-myristoyl-N-acetylglucosamine to form UDP-3-O-myristoylglucosamine and acetate, the committed step in lipid A biosynthesis. This is UDP-3-O-acyl-N-acetylglucosamine deacetylase from Shewanella pealeana (strain ATCC 700345 / ANG-SQ1).